The sequence spans 1081 residues: Carbamoyl phosphate synthase large chain (1081 aa).

The segment at M1–E410 is carboxyphosphate synthetic domain. R129, R176, G182, G183, E215, L217, E222, G248, I249, H250, Q292, and E306 together coordinate ATP. The region spanning K133–V335 is the ATP-grasp 1 domain. 3 residues coordinate Mg(2+): Q292, E306, and N308. Positions 292, 306, and 308 each coordinate Mn(2+). Positions V411 to A558 are oligomerization domain. The interval D559–G944 is carbamoyl phosphate synthetic domain. The region spanning Q683–A878 is the ATP-grasp 2 domain. Residues R719, R758, L760, E765, G790, V791, H792, S793, Q833, and E849 each coordinate ATP. Residues Q833, E849, and N851 each contribute to the Mg(2+) site. 3 residues coordinate Mn(2+): Q833, E849, and N851. One can recognise an MGS-like domain in the interval S945–L1081. The segment at S945 to L1081 is allosteric domain.

This sequence belongs to the CarB family. Composed of two chains; the small (or glutamine) chain promotes the hydrolysis of glutamine to ammonia, which is used by the large (or ammonia) chain to synthesize carbamoyl phosphate. Tetramer of heterodimers (alpha,beta)4. It depends on Mg(2+) as a cofactor. Requires Mn(2+) as cofactor.

The enzyme catalyses hydrogencarbonate + L-glutamine + 2 ATP + H2O = carbamoyl phosphate + L-glutamate + 2 ADP + phosphate + 2 H(+). The catalysed reaction is hydrogencarbonate + NH4(+) + 2 ATP = carbamoyl phosphate + 2 ADP + phosphate + 2 H(+). The protein operates within amino-acid biosynthesis; L-arginine biosynthesis; carbamoyl phosphate from bicarbonate: step 1/1. It functions in the pathway pyrimidine metabolism; UMP biosynthesis via de novo pathway; (S)-dihydroorotate from bicarbonate: step 1/3. Large subunit of the glutamine-dependent carbamoyl phosphate synthetase (CPSase). CPSase catalyzes the formation of carbamoyl phosphate from the ammonia moiety of glutamine, carbonate, and phosphate donated by ATP, constituting the first step of 2 biosynthetic pathways, one leading to arginine and/or urea and the other to pyrimidine nucleotides. The large subunit (synthetase) binds the substrates ammonia (free or transferred from glutamine from the small subunit), hydrogencarbonate and ATP and carries out an ATP-coupled ligase reaction, activating hydrogencarbonate by forming carboxy phosphate which reacts with ammonia to form carbamoyl phosphate. The sequence is that of Carbamoyl phosphate synthase large chain from Ralstonia nicotianae (strain ATCC BAA-1114 / GMI1000) (Ralstonia solanacearum).